Here is a 100-residue protein sequence, read N- to C-terminus: Small ribosomal subunit protein uS14 (100 aa).

It belongs to the universal ribosomal protein uS14 family. In terms of assembly, part of the 30S ribosomal subunit. Contacts proteins S3 and S10.

In terms of biological role, binds 16S rRNA, required for the assembly of 30S particles and may also be responsible for determining the conformation of the 16S rRNA at the A site. The protein is Small ribosomal subunit protein uS14 of Prochlorococcus marinus (strain MIT 9215).